The sequence spans 395 residues: Formate-dependent phosphoribosylglycinamide formyltransferase (395 aa).

N(1)-(5-phospho-beta-D-ribosyl)glycinamide contacts are provided by residues 22 to 23 and E82; that span reads EL. ATP contacts are provided by residues R115, K156, 161 to 166, 196 to 199, and E204; these read SSGKGQ and EGFI. Residues 120 to 309 enclose the ATP-grasp domain; sequence RLAAETLGLP…EFALHARAIL (190 aa). Positions 268 and 280 each coordinate Mg(2+). N(1)-(5-phospho-beta-D-ribosyl)glycinamide is bound by residues D287, K356, and 363-364; that span reads RR.

The protein belongs to the PurK/PurT family. As to quaternary structure, homodimer.

It carries out the reaction N(1)-(5-phospho-beta-D-ribosyl)glycinamide + formate + ATP = N(2)-formyl-N(1)-(5-phospho-beta-D-ribosyl)glycinamide + ADP + phosphate + H(+). The protein operates within purine metabolism; IMP biosynthesis via de novo pathway; N(2)-formyl-N(1)-(5-phospho-D-ribosyl)glycinamide from N(1)-(5-phospho-D-ribosyl)glycinamide (formate route): step 1/1. Involved in the de novo purine biosynthesis. Catalyzes the transfer of formate to 5-phospho-ribosyl-glycinamide (GAR), producing 5-phospho-ribosyl-N-formylglycinamide (FGAR). Formate is provided by PurU via hydrolysis of 10-formyl-tetrahydrofolate. The protein is Formate-dependent phosphoribosylglycinamide formyltransferase of Stenotrophomonas maltophilia (strain R551-3).